The chain runs to 662 residues: Potassium channel KAT3 (662 aa).

Residues Met-1–Glu-90 are Cytoplasmic-facing. Residues Leu-91 to Glu-111 form a helical membrane-spanning segment. Topologically, residues Lys-112–Leu-118 are extracellular. The helical transmembrane segment at Leu-119–Val-139 threads the bilayer. Topologically, residues Ser-140–Ser-163 are cytoplasmic. A helical transmembrane segment spans residues Val-164–Thr-184. At Gly-185–Gly-194 the chain is on the extracellular side. The helical; Voltage-sensor transmembrane segment at Phe-195 to Glu-215 threads the bilayer. At Lys-216–Lys-229 the chain is on the cytoplasmic side. The chain crosses the membrane as a helical span at residues Leu-230–Tyr-250. Residues His-251 to Thr-277 are Extracellular-facing. An intramembrane region (pore-forming) is located at residues Tyr-278 to Ala-297. Topologically, residues Val-298–Arg-301 are extracellular. Residues Glu-302–Gly-322 form a helical membrane-spanning segment. Residues Ile-323 to Phe-662 lie on the Cytoplasmic side of the membrane. Leu-406–Leu-527 lines the a nucleoside 3',5'-cyclic phosphate pocket. Residues Lys-528–Ser-558 adopt a coiled-coil conformation. The region spanning Arg-591–Phe-662 is the KHA domain.

Belongs to the potassium channel family. Plant (TC 1.A.1.4) subfamily. As to quaternary structure, the potassium channel is probably composed of a homo- or heterotetrameric complex of pore-forming subunits. May interact with AKT1 and AKT2. Interacts with SLAC1. Expressed predominantly in root hairs and root endodermis and, at a lower level, in leaf nodes, trichomes, and hydathodes.

Its subcellular location is the membrane. Probable modulatory (alpha) subunit of inward-rectifying potassium channels. Could mediate potassium uptake from the soil solution by plant roots in association with AKT1. The polypeptide is Potassium channel KAT3 (KAT3) (Arabidopsis thaliana (Mouse-ear cress)).